The following is an 80-amino-acid chain: Small ribosomal subunit protein bS16 (80 aa).

The protein belongs to the bacterial ribosomal protein bS16 family.

This is Small ribosomal subunit protein bS16 from Nitrosococcus oceani (strain ATCC 19707 / BCRC 17464 / JCM 30415 / NCIMB 11848 / C-107).